The primary structure comprises 340 residues: MSSYILFGLENPLLDYYVGGETATLEKYGLKSNDAVLASESQMGIYKEPCVSYSAGGAAQNSCRAAQYVLPPNSTVFAGCVGQDKFADMLLESNEKAGLRSEFSVDPTTPTGVCAVVLSNNNKNRSLCTNLGAANNYKLKDLQQPNVWKFVEEAKVIYVGGFHLTVSPESMLCLAQHANENNKPYIMNLSAPFLSQFFKEQMDSVIPYCDYVIGNEAEILSYGENHGIKSTDVQEIALALSSVEKVNKKRTRVVVITQGADATIVAKDGKVTTYKPNRVPSEEIVDTNGAGDAFAGGFIAALSQGQGIDYAVTLGHWLGQECIKVSGTTLPLPKKQFPLP.

Residue aspartate 292 is part of the active site.

This sequence belongs to the carbohydrate kinase PfkB family. Mg(2+) is required as a cofactor.

It catalyses the reaction adenosine + ATP = AMP + ADP + H(+). It participates in purine metabolism; AMP biosynthesis via salvage pathway; AMP from adenosine: step 1/1. The sequence is that of Adenosine kinase (ado1) from Schizosaccharomyces pombe (strain 972 / ATCC 24843) (Fission yeast).